The sequence spans 292 residues: Coatomer subunit epsilon (292 aa).

The protein belongs to the COPE family. As to quaternary structure, oligomeric complex that consists of at least the alpha, beta, beta', gamma, delta, epsilon and zeta subunits.

The protein resides in the cytoplasm. The protein localises to the golgi apparatus membrane. Its subcellular location is the cytoplasmic vesicle. It is found in the COPI-coated vesicle membrane. Its function is as follows. The coatomer is a cytosolic protein complex that binds to dilysine motifs and reversibly associates with Golgi non-clathrin-coated vesicles, which further mediate biosynthetic protein transport from the ER, via the Golgi up to the trans Golgi network. The coatomer complex is required for budding from Golgi membranes, and is essential for the retrograde Golgi-to-ER transport of dilysine-tagged proteins. The polypeptide is Coatomer subunit epsilon (cope-1) (Caenorhabditis elegans).